Here is a 359-residue protein sequence, read N- to C-terminus: Histidinol-phosphate aminotransferase (359 aa).

Lysine 212 is subject to N6-(pyridoxal phosphate)lysine.

It belongs to the class-II pyridoxal-phosphate-dependent aminotransferase family. Histidinol-phosphate aminotransferase subfamily. Homodimer. Pyridoxal 5'-phosphate is required as a cofactor.

The enzyme catalyses L-histidinol phosphate + 2-oxoglutarate = 3-(imidazol-4-yl)-2-oxopropyl phosphate + L-glutamate. Its pathway is amino-acid biosynthesis; L-histidine biosynthesis; L-histidine from 5-phospho-alpha-D-ribose 1-diphosphate: step 7/9. The polypeptide is Histidinol-phosphate aminotransferase (Buchnera aphidicola subsp. Melaphis rhois).